An 87-amino-acid polypeptide reads, in one-letter code: Small ribosomal subunit protein uS17 (87 aa).

It belongs to the universal ribosomal protein uS17 family. In terms of assembly, part of the 30S ribosomal subunit.

Its function is as follows. One of the primary rRNA binding proteins, it binds specifically to the 5'-end of 16S ribosomal RNA. In Oceanobacillus iheyensis (strain DSM 14371 / CIP 107618 / JCM 11309 / KCTC 3954 / HTE831), this protein is Small ribosomal subunit protein uS17.